Consider the following 1342-residue polypeptide: Restriction of telomere capping protein 1 (1342 aa).

Residues Met1–Ser39 form a disordered region. 6 WD repeats span residues Asn207–Asn248, Glu256–Ser296, Thr305–Ala342, Ala367–Glu406, Asn439–His486, and Leu489–Glu527. Disordered stretches follow at residues Pro559–Ile593, Thr600–Phe619, Ala630–Glu651, Lys736–Asp766, and Leu788–Arg831. Positions Ala630 to Thr644 are enriched in low complexity. Over residues Asp753 to Asp766 the composition is skewed to acidic residues. Residues Ser815–Arg824 show a composition bias toward low complexity. One copy of the WD 7 repeat lies at Lys844–Asp884. Disordered regions lie at residues Ala942–Glu963 and Asp1014–Gln1047. Basic and acidic residues-rich tracts occupy residues Asp952–Glu963 and His1016–Pro1028. A phosphoserine mark is found at Ser1037, Ser1081, Ser1088, Ser1090, Ser1124, and Ser1134. 2 WD repeats span residues Ser1130 to Tyr1170 and Leu1217 to Asn1256. The segment at Cys1294–Cys1336 adopts an RING-type; degenerate zinc-finger fold.

This sequence belongs to the WD repeat RTC1 family.

The protein localises to the vacuole. Functionally, may be involved in a process influencing telomere capping. This is Restriction of telomere capping protein 1 (RTC1) from Saccharomyces cerevisiae (strain JAY291) (Baker's yeast).